The primary structure comprises 349 residues: Aspartate-semialdehyde dehydrogenase (349 aa).

NADP(+)-binding positions include 12 to 15 (TGSV) and 39 to 40 (NS). A phosphate-binding site is contributed by Arg-113. Cys-148 functions as the Acyl-thioester intermediate in the catalytic mechanism. Gln-175 contributes to the substrate binding site. 178-179 (SG) provides a ligand contact to NADP(+). Glu-201 is a substrate binding site. Phosphate is bound at residue Lys-204. Arg-234 serves as a coordination point for substrate. The active-site Proton acceptor is His-241. Residue 326–327 (NT) coordinates NADP(+).

It belongs to the aspartate-semialdehyde dehydrogenase family. Homodimer.

It catalyses the reaction L-aspartate 4-semialdehyde + phosphate + NADP(+) = 4-phospho-L-aspartate + NADPH + H(+). It functions in the pathway amino-acid biosynthesis; L-lysine biosynthesis via DAP pathway; (S)-tetrahydrodipicolinate from L-aspartate: step 2/4. Its pathway is amino-acid biosynthesis; L-methionine biosynthesis via de novo pathway; L-homoserine from L-aspartate: step 2/3. The protein operates within amino-acid biosynthesis; L-threonine biosynthesis; L-threonine from L-aspartate: step 2/5. In terms of biological role, catalyzes the NADPH-dependent formation of L-aspartate-semialdehyde (L-ASA) by the reductive dephosphorylation of L-aspartyl-4-phosphate. This chain is Aspartate-semialdehyde dehydrogenase, found in Leptospira interrogans serogroup Icterohaemorrhagiae serovar copenhageni (strain Fiocruz L1-130).